Reading from the N-terminus, the 242-residue chain is Megakaryocyte and platelet inhibitory receptor G6b (242 aa).

The first 17 residues, 1–17 (MALVLPLLPLLLSKVQG), serve as a signal peptide directing secretion. Asn-32 and Asn-112 each carry an N-linked (GlcNAc...) asparagine glycan. A helical membrane pass occupies residues 141-161 (VLIPLLGVGLVLGLGVAGVVW). Short sequence motifs (ITIM motif) lie at residues 210–215 (LHYADL) and 236–241 (TVYAVV). At Tyr-212 the chain carries Phosphotyrosine.

Interacts (via ITIM motif) with PTPN6 and PTPN11. Binds to heparin. Post-translationally, N-glycosylated. May be O-glycosylated. In terms of processing, phosphorylated. In terms of tissue distribution, expressed in mature megakaryocytes and platelets. Not expressed by immature megakaryocytes.

The protein localises to the cell membrane. Functionally, inhibitory receptor that acts as a critical regulator of hematopoietic lineage differentiation, megakaryocyte function and platelet production. Inhibits platelet aggregation and activation by agonists such as ADP and collagen-related peptide. This regulation of megakaryocate function as well as platelet production ann activation is done through the inhibition (via the 2 ITIM motifs) of the receptors CLEC1B and GP6:FcRgamma signaling. Appears to operate in a calcium-independent manner. The sequence is that of Megakaryocyte and platelet inhibitory receptor G6b from Mus musculus (Mouse).